A 748-amino-acid chain; its full sequence is Polyribonucleotide nucleotidyltransferase (748 aa).

Residues Asp487 and Asp493 each contribute to the Mg(2+) site. The KH domain maps to Pro554–Ile613. In terms of domain architecture, S1 motif spans Gly623–Lys691. The segment at Lys691–Asn748 is disordered. Residues Ser699–Lys712 are compositionally biased toward low complexity. A compositionally biased stretch (basic and acidic residues) spans Asp713–Asp722.

Belongs to the polyribonucleotide nucleotidyltransferase family. It depends on Mg(2+) as a cofactor.

The protein resides in the cytoplasm. It carries out the reaction RNA(n+1) + phosphate = RNA(n) + a ribonucleoside 5'-diphosphate. Its function is as follows. Involved in mRNA degradation. Catalyzes the phosphorolysis of single-stranded polyribonucleotides processively in the 3'- to 5'-direction. This chain is Polyribonucleotide nucleotidyltransferase, found in Rickettsia africae (strain ESF-5).